The chain runs to 358 residues: MTTVPTTQRAVVVGPEDGSVVVAESIPLPDIEPDAVLVQVSAVALNPVDTKMMPGFLNPGNVLGLDFAGTVVAVGPAQPAWRSLQVGDRVFGCTDGCDSRRPRVGAFTQFTACRGSILIKMPDHMSFATAASMGNAIFSSGFALFHSLQLPGSLTATAEKSHWVLIYGGATATGTMALQFLRRAGHKPIAVCSAKHFDMAREYGAVAAFDYHSESHVQEIRDLTKNALSFAFDCVTTQSSVLACEEAMGRLGGRYTALDPFDPTLVSRKAVKLDWILTLTLMGRGSVWPKPFGCEPDEALLTWGTKLAEVAEGVLAEGDHVLKAHPMRIMEGGLDAIPSGIDAIRQGQVRGFKLVYLL.

NADP(+)-binding positions include 48 to 51 (VDTK), 170 to 173 (ATAT), 193 to 196 (SAKH), Tyr211, 258 to 259 (LD), and 349 to 350 (VR).

This sequence belongs to the zinc-containing alcohol dehydrogenase family. Monomer.

It catalyses the reaction 10 malonyl-CoA + acetyl-CoA + 3 AH2 + 8 NADPH + 18 H(+) = cordypyrone A + 3 A + 10 CO2 + 8 NADP(+) + 11 CoA + 8 H2O. It functions in the pathway secondary metabolite biosynthesis. Trans-enoyl reductase; part of the gene cluster that mediates the biosynthesis of cordypyrones A and B, 2 pyrones that show modest activities against pathogenic bacteria including methicillin-resistant Staphylococcus aureus (MRSA), Mycobacterium tuberculosis and Bacillus cereus. The HR-PKS milA catalyzes the formation of cordypyrones A via condensation of one acetate with 10 malonate units. Since milA lacks an enoyl reductase domain, the 2 beta-keto processing domains DH and KR of milA collaborate with the trans-enoyl reductase milB to catalyze the different levels of reduction. The cytochrome P450 monooxygenase milC then hydroxylates the C-22 of cordypyrones A to yield cordypyrones B. This chain is Trans-enoyl reductase milB, found in Cordyceps militaris (strain CM01) (Caterpillar fungus).